The following is a 355-amino-acid chain: Glucose-6-phosphatase 2 (355 aa).

Residues 1-24 (MDFLHRNGVLIIQHLQKDYRAYYT) are Lumenal-facing. The helical transmembrane segment at 25-45 (FLNFMSNVGDPRNIFFIYFPL) threads the bilayer. Over 46–56 (CFQFNQTVGTK) the chain is Cytoplasmic. A helical transmembrane segment spans residues 57–77 (MIWVAVIGDWLNLIFKWILFG). The Lumenal portion of the chain corresponds to 78–115 (HRPYWWVQETQIYPNHSSPCLEQFPTTCETGPGSPSGH). Position 79 (Arg-79) interacts with substrate. N-linked (GlcNAc...) asparagine glycosylation occurs at Asn-92. Residue His-115 is the Proton donor of the active site. The chain crosses the membrane as a helical span at residues 116–136 (AMGASCVWYVMVTAALSHTVC). The Cytoplasmic segment spans residues 137-146 (GMDKFSITLH). The helical transmembrane segment at 147-167 (RLTWSFLWSVFWLIQISVCIS) threads the bilayer. Residue Arg-168 is a topological domain, lumenal. Arg-168 contacts substrate. Residues 169-189 (VFIATHFPHQVILGVIGGMLV) traverse the membrane as a helical segment. His-174 functions as the Nucleophile in the catalytic mechanism. Over 190-211 (AEAFEHTPGIQTASLGTYLKTN) the chain is Cytoplasmic. A helical membrane pass occupies residues 212 to 232 (LFLFLFAVGFYLLLRVLNIDL). Over 233–261 (LWSVPIAKKWCANPDWIHIDTTPFAGLVR) the chain is Lumenal. A helical transmembrane segment spans residues 262–282 (NLGVLFGLGFAINSEMFLLSC). Residues 283–293 (RGGNNYTLSFR) are Cytoplasmic-facing. The helical transmembrane segment at 294–314 (LLCALTSLTILQLYHFLQIPT) threads the bilayer. Topologically, residues 315–318 (HEEH) are lumenal. Residues 319-339 (LFYVLSFCKSASIPLTVVAFI) form a helical membrane-spanning segment. Topologically, residues 340 to 355 (PYSVHMLMKQSGKKSQ) are cytoplasmic. The Prevents secretion from ER motif lies at 352-355 (KKSQ).

This sequence belongs to the glucose-6-phosphatase family. In terms of processing, N-glycosylated; the non-glycosylated form is more unstable and is degraded through the proteasome. As to expression, specifically expressed in pancreas and also detected to a lower extent in testis. Expressed by most islet cells in the pancreas (at protein level).

It localises to the endoplasmic reticulum membrane. It catalyses the reaction D-glucose 6-phosphate + H2O = D-glucose + phosphate. It participates in carbohydrate biosynthesis; gluconeogenesis. In terms of biological role, may hydrolyze glucose-6-phosphate to glucose in the endoplasmic reticulum. May be responsible for glucose production through glycogenolysis and gluconeogenesis. This Homo sapiens (Human) protein is Glucose-6-phosphatase 2 (G6PC2).